The sequence spans 260 residues: Snake venom serine protease serpentokallikrein-1 (260 aa).

The signal sequence occupies residues 1-18 (MVLIRVLANLLILQLSYA). The propeptide occupies 19 to 24 (QRTSEL). The Peptidase S1 domain occupies 25–251 (VIGGDECNIN…HLDWIKSIIA (227 aa)). Disulfide bonds link Cys-31-Cys-165, Cys-52-Cys-68, Cys-102-Cys-258, Cys-144-Cys-212, Cys-176-Cys-191, and Cys-202-Cys-227. His-67 (charge relay system) is an active-site residue. Residues Asn-81 and Asn-105 are each glycosylated (N-linked (GlcNAc...) asparagine). Residue Asp-112 is the Charge relay system of the active site. N-linked (GlcNAc...) asparagine glycans are attached at residues Asn-156 and Asn-172. Ser-206 acts as the Charge relay system in catalysis.

This sequence belongs to the peptidase S1 family. Snake venom subfamily. In terms of assembly, monomer. As to expression, expressed by the venom gland.

The protein localises to the secreted. In terms of biological role, snake venom serine protease that may act in the hemostasis system of the prey. The sequence is that of Snake venom serine protease serpentokallikrein-1 from Protobothrops mucrosquamatus (Taiwan habu).